The following is a 375-amino-acid chain: Chaperone protein DnaJ (375 aa).

The J domain occupies 5–69; the sequence is DYYEVLGVSK…QKRAQYDQFG (65 aa). A CR-type zinc finger spans residues 132-214; sequence GKETIIEIPR…CGGTGKVKKR (83 aa). Cysteine 145, cysteine 148, cysteine 162, cysteine 165, cysteine 188, cysteine 191, cysteine 202, and cysteine 205 together coordinate Zn(2+). CXXCXGXG motif repeat units lie at residues 145-152, 162-169, 188-195, and 202-209; these read CETCKGSG, CSHCGGSG, CHHCEGTG, and CSDCGGTG.

The protein belongs to the DnaJ family. As to quaternary structure, homodimer. Zn(2+) is required as a cofactor.

The protein resides in the cytoplasm. In terms of biological role, participates actively in the response to hyperosmotic and heat shock by preventing the aggregation of stress-denatured proteins and by disaggregating proteins, also in an autonomous, DnaK-independent fashion. Unfolded proteins bind initially to DnaJ; upon interaction with the DnaJ-bound protein, DnaK hydrolyzes its bound ATP, resulting in the formation of a stable complex. GrpE releases ADP from DnaK; ATP binding to DnaK triggers the release of the substrate protein, thus completing the reaction cycle. Several rounds of ATP-dependent interactions between DnaJ, DnaK and GrpE are required for fully efficient folding. Also involved, together with DnaK and GrpE, in the DNA replication of plasmids through activation of initiation proteins. The sequence is that of Chaperone protein DnaJ from Bacillus velezensis (strain DSM 23117 / BGSC 10A6 / LMG 26770 / FZB42) (Bacillus amyloliquefaciens subsp. plantarum).